The sequence spans 293 residues: Formamidopyrimidine-DNA glycosylase (293 aa).

The active-site Schiff-base intermediate with DNA is the Pro2. Residue Glu3 is the Proton donor of the active site. Lys58 functions as the Proton donor; for beta-elimination activity in the catalytic mechanism. Positions 104, 127, and 170 each coordinate DNA. The FPG-type zinc finger occupies 257–293; that stretch reads SVYGREGKPCRNPACGGTVERVVQSGRSTFFCASCQT. Arg283 serves as the catalytic Proton donor; for delta-elimination activity.

The protein belongs to the FPG family. In terms of assembly, monomer. The cofactor is Zn(2+).

The enzyme catalyses Hydrolysis of DNA containing ring-opened 7-methylguanine residues, releasing 2,6-diamino-4-hydroxy-5-(N-methyl)formamidopyrimidine.. It catalyses the reaction 2'-deoxyribonucleotide-(2'-deoxyribose 5'-phosphate)-2'-deoxyribonucleotide-DNA = a 3'-end 2'-deoxyribonucleotide-(2,3-dehydro-2,3-deoxyribose 5'-phosphate)-DNA + a 5'-end 5'-phospho-2'-deoxyribonucleoside-DNA + H(+). Its function is as follows. Involved in base excision repair of DNA damaged by oxidation or by mutagenic agents. Acts as a DNA glycosylase that recognizes and removes damaged bases. Has a preference for oxidized purines, such as 7,8-dihydro-8-oxoguanine (8-oxoG). Has AP (apurinic/apyrimidinic) lyase activity and introduces nicks in the DNA strand. Cleaves the DNA backbone by beta-delta elimination to generate a single-strand break at the site of the removed base with both 3'- and 5'-phosphates. The chain is Formamidopyrimidine-DNA glycosylase from Brucella melitensis biotype 1 (strain ATCC 23456 / CCUG 17765 / NCTC 10094 / 16M).